The chain runs to 375 residues: 23S rRNA (uracil(747)-C(5))-methyltransferase RlmC (375 aa).

4 residues coordinate [4Fe-4S] cluster: C3, C11, C14, and C87. Positions 212, 241, 262, and 307 each coordinate S-adenosyl-L-methionine. C334 functions as the Nucleophile in the catalytic mechanism.

This sequence belongs to the class I-like SAM-binding methyltransferase superfamily. RNA M5U methyltransferase family. RlmC subfamily.

It carries out the reaction uridine(747) in 23S rRNA + S-adenosyl-L-methionine = 5-methyluridine(747) in 23S rRNA + S-adenosyl-L-homocysteine + H(+). Catalyzes the formation of 5-methyl-uridine at position 747 (m5U747) in 23S rRNA. The polypeptide is 23S rRNA (uracil(747)-C(5))-methyltransferase RlmC (Cronobacter sakazakii (strain ATCC BAA-894) (Enterobacter sakazakii)).